We begin with the raw amino-acid sequence, 270 residues long: Bifunctional folate synthesis protein (270 aa).

Residues 1–119 (MDQLQIKDLE…TCSVTIHRRK (119 aa)) form a DHNA region. Residues E21, Y53, and 72–73 (IE) contribute to the substrate site. K99 (proton donor/acceptor; for DHNA activity) is an active-site residue. Positions 120–270 (QRAFIALGSN…IRNLYDALKK (151 aa)) are HPPK. ATP is bound by residues 160-163 (TEPW), 171-173 (FAN), 192-195 (LAIE), 200-215 (RVRE…DLDL), 227-233 (DLILPHP), and 238-240 (RLF). Mg(2+)-binding residues include D212 and D214.

It in the N-terminal section; belongs to the DHNA family. The protein in the C-terminal section; belongs to the HPPK family. As to quaternary structure, homotrimer or homotetramer.

It catalyses the reaction 7,8-dihydroneopterin = 6-hydroxymethyl-7,8-dihydropterin + glycolaldehyde. It carries out the reaction 6-hydroxymethyl-7,8-dihydropterin + ATP = (7,8-dihydropterin-6-yl)methyl diphosphate + AMP + H(+). The protein operates within cofactor biosynthesis; tetrahydrofolate biosynthesis; 2-amino-4-hydroxy-6-hydroxymethyl-7,8-dihydropteridine diphosphate from 7,8-dihydroneopterin triphosphate: step 3/4. It functions in the pathway cofactor biosynthesis; tetrahydrofolate biosynthesis; 2-amino-4-hydroxy-6-hydroxymethyl-7,8-dihydropteridine diphosphate from 7,8-dihydroneopterin triphosphate: step 4/4. Catalyzes two sequential steps of tetrahydrofolate biosynthesis, the conversion of 7,8-dihydroneopterin to 6-hydroxymethyl-7,8-dihydropterin diphosphate. The sequence is that of Bifunctional folate synthesis protein from Streptococcus pneumoniae serotype 4 (strain ATCC BAA-334 / TIGR4).